The sequence spans 223 residues: ATP-dependent dethiobiotin synthetase BioD (223 aa).

Mg(2+) is bound at residue Thr16. Residue Lys37 is part of the active site. Ser41 provides a ligand contact to substrate. Mg(2+) contacts are provided by Asp50 and Glu111. Residues Asp50, 111–114 (EGAG), 171–172 (NQ), 201–203 (AHV), and Glu208 contribute to the ATP site.

Belongs to the dethiobiotin synthetase family. As to quaternary structure, homodimer. The cofactor is Mg(2+).

The protein localises to the cytoplasm. The enzyme catalyses (7R,8S)-7,8-diammoniononanoate + CO2 + ATP = (4R,5S)-dethiobiotin + ADP + phosphate + 3 H(+). It functions in the pathway cofactor biosynthesis; biotin biosynthesis; biotin from 7,8-diaminononanoate: step 1/2. Functionally, catalyzes a mechanistically unusual reaction, the ATP-dependent insertion of CO2 between the N7 and N8 nitrogen atoms of 7,8-diaminopelargonic acid (DAPA, also called 7,8-diammoniononanoate) to form a ureido ring. This is ATP-dependent dethiobiotin synthetase BioD from Anaeromyxobacter sp. (strain Fw109-5).